A 314-amino-acid polypeptide reads, in one-letter code: Porphobilinogen deaminase (314 aa).

An S-(dipyrrolylmethanemethyl)cysteine modification is found at cysteine 241.

It belongs to the HMBS family. Monomer. The cofactor is dipyrromethane.

The enzyme catalyses 4 porphobilinogen + H2O = hydroxymethylbilane + 4 NH4(+). It participates in porphyrin-containing compound metabolism; protoporphyrin-IX biosynthesis; coproporphyrinogen-III from 5-aminolevulinate: step 2/4. Its pathway is porphyrin-containing compound metabolism; chlorophyll biosynthesis. Tetrapolymerization of the monopyrrole PBG into the hydroxymethylbilane pre-uroporphyrinogen in several discrete steps. The sequence is that of Porphobilinogen deaminase from Chloroherpeton thalassium (strain ATCC 35110 / GB-78).